The sequence spans 115 residues: Large ribosomal subunit protein bL19 (115 aa).

Belongs to the bacterial ribosomal protein bL19 family.

In terms of biological role, this protein is located at the 30S-50S ribosomal subunit interface and may play a role in the structure and function of the aminoacyl-tRNA binding site. In Yersinia pseudotuberculosis serotype O:1b (strain IP 31758), this protein is Large ribosomal subunit protein bL19.